A 257-amino-acid polypeptide reads, in one-letter code: Type III pantothenate kinase (257 aa).

Asp-11–Lys-18 contributes to the ATP binding site. Residues Tyr-96 and Gly-103–Arg-106 each bind substrate. Residue Asp-105 is the Proton acceptor of the active site. Residue Asp-125 participates in K(+) binding. Residue Thr-128 coordinates ATP. Thr-179 is a binding site for substrate.

This sequence belongs to the type III pantothenate kinase family. In terms of assembly, homodimer. NH4(+) serves as cofactor. It depends on K(+) as a cofactor.

It localises to the cytoplasm. The catalysed reaction is (R)-pantothenate + ATP = (R)-4'-phosphopantothenate + ADP + H(+). Its pathway is cofactor biosynthesis; coenzyme A biosynthesis; CoA from (R)-pantothenate: step 1/5. Functionally, catalyzes the phosphorylation of pantothenate (Pan), the first step in CoA biosynthesis. This Nitrosomonas eutropha (strain DSM 101675 / C91 / Nm57) protein is Type III pantothenate kinase.